Here is a 946-residue protein sequence, read N- to C-terminus: MFAKFDMLEEEARALVRKVGNAVDPIYGFSTTSCQIYDTAWAAMISKEEHGDKVWLFPESFKYLLEKQGEDGSWERHPRSKTVGVLNTAAACLALLRHVKNPLQLQDIAAQDIELRIQRGLRSLEEQLIAWDDVLDTNHIGVEMIVPALLDYLQAEDENVDFEFESHSLLMQMYKEKMARFSPESLYRARPSSALHNLEALIGKLDFDKVGHHLYNGSMMASPSSTAAFLMHASPWSHEAEAYLRHVFEAGTGKGSGGFPGTYPTTYFELNWVLSTLMKSGFTLSDLECDELSSIANTIAEGFECDHGVIGFAPRAVDVDDTAKGLLTLTLLGMDEGVSPAPMIAMFEAKDHFLTFLGERDPSFTSNCHVLLSLLHRTDLLQYLPQIRKTTTFLCEAWWACDGQIKDKWHLSHLYPTMLMVQAFAEILLKSAEGEPLHDAFDAATLSRVSICVFQACLRTLLAQSQDGSWHGQPEASCYAVLTLAESGRLVLLQALQPQIAAAMEKAADVMQAGRWSCSDHDCDWTSKTAYRVDLVAAAYRLAAMKASSNLTFTVDDNVSKRSNGFQQLVGRTDLFSGVPAWELQASFLESALFVPLLRNHRLDVFDRDDIKVSKDHYLDMIPFTWVGCNNRSRTYVSTSFLFDMMIISMLGYQIDEFFEAEAAPAFAQCIGQLHQVVDKVVDEVIDEVVDKVVGKVVGKVVGKVVDERVDSPTHEAIAICNIEASLRRFVDHVLHHQHVLHASQQEQDILWRELRAFLHAHVVQMADNSTLAPPGRTFFDWVRTTAADHVACAYSFAFACCITSATIGQGQSMFATVNELYLVQAAARHMTTMCRMCNDIGSVDRDFIEANINSVHFPEFSTLSLVADKKKALARLAAYEKSCLTHTLDQFENEVLQSPRVSSAASGDFRTRKVAVVRFFADVTDFYDQLYILRDLSSSLKHVGT.

Mg(2+)-binding residues include D656, E660, N839, D840, S843, and D847. A DEXXE motif motif is present at residues 656 to 660; it reads DEFFE.

The protein belongs to the terpene synthase family. Mg(2+) serves as cofactor.

It carries out the reaction ent-copalyl diphosphate = ent-kaur-16-ene + diphosphate. The enzyme catalyses (2E,6E,10E)-geranylgeranyl diphosphate = ent-copalyl diphosphate. It participates in plant hormone biosynthesis; gibberellin biosynthesis. Catalyzes the conversion of geranylgeranyl diphosphate to the gibberellin precursor ent-kaurene diphosphate in a two step process. This is Ent-kaur-16-ene synthase from Phaeosphaeria sp. (strain L487).